A 778-amino-acid polypeptide reads, in one-letter code: DNA topoisomerase 1 (778 aa).

Residues 1–141 (MNSSDEEDIA…ETPEEDQGYK (141 aa)) are disordered. Residues 17–26 (KSSSITSAST) are compositionally biased toward low complexity. Basic and acidic residues-rich tracts occupy residues 71–83 (VKTE…EPKS) and 100–121 (EKTT…ESKT). The segment covering 122–131 (QSDSQASVKS) has biased composition (polar residues). Interaction with DNA regions lie at residues 367–368 (KY), 430–435 (RAGGEK), and 522–524 (TAK). One can recognise a Topo IB-type catalytic domain in the interval 374–778 (NSSVKGQSDF…IESADENWRF (405 aa)). Tyr736 functions as the O-(3'-phospho-DNA)-tyrosine intermediate in the catalytic mechanism.

It belongs to the type IB topoisomerase family.

The catalysed reaction is ATP-independent breakage of single-stranded DNA, followed by passage and rejoining.. Releases the supercoiling and torsional tension of DNA introduced during the DNA replication and transcription by transiently cleaving and rejoining one strand of the DNA duplex. Introduces a single-strand break via transesterification at a target site in duplex DNA. The scissile phosphodiester is attacked by the catalytic tyrosine of the enzyme, resulting in the formation of a DNA-(3'-phosphotyrosyl)-enzyme intermediate and the expulsion of a 5'-OH DNA strand. The free DNA strand then rotates around the intact phosphodiester bond on the opposing strand, thus removing DNA supercoils. Finally, in the religation step, the DNA 5'-OH attacks the covalent intermediate to expel the active-site tyrosine and restore the DNA phosphodiester backbone. The polypeptide is DNA topoisomerase 1 (TOP1) (Candida albicans (Yeast)).